The following is a 569-amino-acid chain: Cationic amino acid transporter 9, chloroplastic (569 aa).

Residues 1–41 (MGGHEGFSNQRLSSATWFSHFRASALRSKSLPPPSSQTAVR) constitute a chloroplast transit peptide. The next 14 helical transmembrane spans lie at 53–73 (GLFD…VFVV), 81–101 (AGPG…LNAL), 113–135 (VVGG…LVFV), 155–175 (YAVA…LWMG), 181–201 (LGGL…LTLV), 215–235 (VMTA…AFEI), 250–270 (AVLT…AVAN), 284–304 (IGIM…CLVL), 333–353 (ILIS…GLYV), 406–428 (HILS…ALRL), 444–464 (WQEG…AGVF), 467–487 (FSAS…ASAV), 502–522 (FSCP…IFLF), and 528–548 (EAWI…ALYG).

It belongs to the amino acid-polyamine-organocation (APC) superfamily. Cationic amino acid transporter (CAT) (TC 2.A.3.3) family. Expressed in roots, stems, flowers, and leaves.

It is found in the plastid. The protein localises to the chloroplast membrane. Permease involved in the transport of the cationic amino acids. The sequence is that of Cationic amino acid transporter 9, chloroplastic (CAT9) from Arabidopsis thaliana (Mouse-ear cress).